Here is a 222-residue protein sequence, read N- to C-terminus: Non-structural protein V (222 aa).

Residues 61 to 107 (ESTNHQKGSVGGGAKPKKPRPKIAIVPADDKTVPGKPIPNPLLGLDS) are disordered. The Zn(2+) site is built by His171, Cys190, Cys194, Cys206, Cys208, Cys211, Cys215, and Cys218.

It belongs to the paramyxoviruses V protein family. As to quaternary structure, interacts with host DDB1, STAT2 and IFIH1/MDA5. Interacts with host RIGI regulatory protein (via CARDs domain) and host TRIM25 (via SPRY domain); these interactions prevent TRIM25-mediated ubiquitination of RIG-I and disrupts downstream RIG-I signaling.

The protein resides in the host cytoplasm. Plays an essential role in the inhibition of host immune response. Prevents the establishment of cellular antiviral state by blocking interferon-alpha/beta (IFN-alpha/beta) production and signaling pathway. Interacts with host IFIH1/MDA5 and DHX58/LGP2 to inhibit the transduction pathway involved in the activation of IFN-beta promoter, thus protecting the virus against cell antiviral state. Efficiently blocks type I IFN signaling following infection by behaving as a substrate receptor for CUL4-DDB1 E3 ligase complex and targeting host STAT1 for proteasomal degradation. Blocks the type I interferon signaling pathway by disrupting the RIG-I signaling pathway. The polypeptide is Non-structural protein V (P/V) (Parainfluenza virus 5 (strain W3) (PIV5)).